The following is a 787-amino-acid chain: MGIELVCLFLLLLGRNDHVQGGCAWSGAETCSDCLLTGPHCAWCSQENFTHLSGAGERCDTPENLLAKGCQLPFIENPVSQVEILQNKPLSVGRQKNSSDIVQIAPQSLVLKLRPGGEQTLQVQVRQTEDYPVDLYYLMDLSASMDDDLNTIKELGSRLAKEMSKLTSNFRLGFGSFVEKPVSPFMKTTPEEITNPCSSIPYFCLPTFGFKHILPLTDDAERFNEIVRKQKISANIDTPEGGFDAIMQAAVCKEKIGWRNDSLHLLVFVSDADSHFGMDSKLAGIVIPNDGLCHLDNRNEYSMSTVLEYPTIGQLIDKLVQNNVLLIFAVTQEQVHLYENYAKLIPGATVGLLQKDSGNILQLIISAYEELRSEVELEVLGDTEGLNLSFTALCSNGILFPHQKKCSHMKVGDTASFNVSVSITNCEKRSRKLIIKPVGLGDTLEILVSAECDCDCQREVEANSSKCHHGNGSFQCGVCACNPGHMGPRCECGEDMVSTDSCKESPGHPSCSGRGDCYCGQCVCHLSPYGSIYGPYCQCDNFSCLRHKGLLCGDNGDCDCGECVCRDGWTGEYCNCTTSRDACASEDGVLCSGRGDCVCGKCVCRNPGASGPTCERCPTCGDPCNSRRSCIECYLSADGQAQEECEDKCKATGATISEEEFSKDTSVPCSLQGENECLITFLITADNEGKTIIHNISEKDCPKPPNIPMIMLGVSLAILLIGVVLLCIWKLLVSFHDRKEVAKFEAERSKAKWQTGTNPLYRGSTSTFKNVTYKHREKHKVGLSSDG.

An N-terminal signal peptide occupies residues 1–21; that stretch reads MGIELVCLFLLLLGRNDHVQG. In terms of domain architecture, PSI spans 22–71; it reads GCAWSGAETCSDCLLTGPHCAWCSQENFTHLSGAGERCDTPENLLAKGCQ. Residues 22 to 708 are Extracellular-facing; it reads GCAWSGAETC…KDCPKPPNIP (687 aa). Intrachain disulfides connect cysteine 23-cysteine 41, cysteine 31-cysteine 454, cysteine 34-cysteine 59, cysteine 44-cysteine 70, cysteine 197-cysteine 204, cysteine 252-cysteine 293, cysteine 394-cysteine 406, cysteine 426-cysteine 452, cysteine 456-cysteine 476, cysteine 467-cysteine 479, cysteine 481-cysteine 490, cysteine 492-cysteine 519, cysteine 502-cysteine 517, cysteine 511-cysteine 522, cysteine 524-cysteine 537, cysteine 539-cysteine 560, cysteine 544-cysteine 558, cysteine 552-cysteine 563, and cysteine 565-cysteine 574. N-linked (GlcNAc...) asparagine glycosylation is found at asparagine 48 and asparagine 97. Residues 131–371 enclose the VWFA domain; it reads YPVDLYYLMD…QLIISAYEEL (241 aa). Aspartate 140, serine 142, and serine 144 together coordinate Mg(2+). 4 residues coordinate Ca(2+): serine 144, aspartate 147, aspartate 148, and glutamate 179. Ca(2+) contacts are provided by asparagine 235, aspartate 237, proline 239, and glutamate 240. Glutamate 240 contributes to the Mg(2+) binding site. N-linked (GlcNAc...) asparagine glycosylation is present at asparagine 260. The Ca(2+) site is built by aspartate 271 and lysine 355. Asparagine 387 carries an N-linked (GlcNAc...) asparagine glycan. Asparagine 418 is a glycosylation site (N-linked (GlcNAc...) asparagine). I-EGF domains are found at residues 456–491, 492–538, 539–575, and 576–615; these read CQRE…PRCE, CGED…PYCQ, CDNF…EYCN, and CTTS…PTCE. N-linked (GlcNAc...) asparagine glycosylation is found at asparagine 463 and asparagine 471. A glycan (N-linked (GlcNAc...) asparagine) is linked at asparagine 541. An N-linked (GlcNAc...) asparagine glycan is attached at asparagine 575. Cystine bridges form between cysteine 576–cysteine 599, cysteine 583–cysteine 597, cysteine 591–cysteine 602, cysteine 604–cysteine 614, cysteine 617–cysteine 620, cysteine 624–cysteine 669, cysteine 630–cysteine 649, cysteine 633–cysteine 645, and cysteine 677–cysteine 701. N-linked (GlcNAc...) asparagine glycosylation occurs at asparagine 695. A helical membrane pass occupies residues 709 to 729; the sequence is MIMLGVSLAILLIGVVLLCIW. The segment at 730-757 is interaction with HAX1; that stretch reads KLLVSFHDRKEVAKFEAERSKAKWQTGT. Over 730–787 the chain is Cytoplasmic; it reads KLLVSFHDRKEVAKFEAERSKAKWQTGTNPLYRGSTSTFKNVTYKHREKHKVGLSSDG.

It belongs to the integrin beta chain family. In terms of assembly, heterodimer of an alpha and a beta subunit. Interacts with FLNB. Interacts with HAX1. ITGAV:ITGB6 interacts with FBN1. ITGAV:ITGB6 interacts with TGFB1.

The protein resides in the cell membrane. The protein localises to the cell junction. It is found in the focal adhesion. Its function is as follows. Integrin alpha-V:beta-6 (ITGAV:ITGB6) is a receptor for fibronectin and cytotactin. It recognizes the sequence R-G-D in its ligands. ITGAV:ITGB6 acts as a receptor for fibrillin-1 (FBN1) and mediates R-G-D-dependent cell adhesion to FBN1. Integrin alpha-V:beta-6 (ITGAV:ITGB6) mediates R-G-D-dependent release of transforming growth factor beta-1 (TGF-beta-1) from regulatory Latency-associated peptide (LAP), thereby playing a key role in TGF-beta-1 activation. The protein is Integrin beta-6 (Itgb6) of Rattus norvegicus (Rat).